Consider the following 331-residue polypeptide: Carbonic anhydrase-related protein 11 (331 aa).

A signal peptide spans 1 to 23; it reads MGGAARLSAPRALVLWAVLGAAA. Residues 33-306 enclose the Alpha-carbonic anhydrase domain; sequence DWWSYKDNLQ…LAHRALRGNR (274 aa). N118, N170, N189, and N263 each carry an N-linked (GlcNAc...) asparagine glycan. The interval 303-331 is disordered; it reads RGNRDPRHPERRCRGPNYRLHVDGAPHGR. The segment covering 322–331 has biased composition (basic and acidic residues); it reads LHVDGAPHGR.

It belongs to the alpha-carbonic anhydrase family.

Its subcellular location is the secreted. Does not have a catalytic activity. This is Carbonic anhydrase-related protein 11 (CA11) from Sus scrofa (Pig).